Here is a 354-residue protein sequence, read N- to C-terminus: cAMP-dependent protein kinase catalytic subunit 2 (354 aa).

In terms of domain architecture, Protein kinase spans Tyr-45–Phe-301. ATP-binding positions include Leu-51–Val-59 and Lys-74. Asp-168 acts as the Proton acceptor in catalysis. Positions Gln-302–Phe-354 constitute an AGC-kinase C-terminal domain.

The protein belongs to the protein kinase superfamily. AGC Ser/Thr protein kinase family. cAMP subfamily. More abundant in adult body than adult head.

It catalyses the reaction L-seryl-[protein] + ATP = O-phospho-L-seryl-[protein] + ADP + H(+). The catalysed reaction is L-threonyl-[protein] + ATP = O-phospho-L-threonyl-[protein] + ADP + H(+). The protein is cAMP-dependent protein kinase catalytic subunit 2 (Pka-C2) of Drosophila melanogaster (Fruit fly).